Reading from the N-terminus, the 252-residue chain is 3-deoxy-manno-octulosonate cytidylyltransferase (252 aa).

Belongs to the KdsB family.

The protein localises to the cytoplasm. It carries out the reaction 3-deoxy-alpha-D-manno-oct-2-ulosonate + CTP = CMP-3-deoxy-beta-D-manno-octulosonate + diphosphate. The protein operates within nucleotide-sugar biosynthesis; CMP-3-deoxy-D-manno-octulosonate biosynthesis; CMP-3-deoxy-D-manno-octulosonate from 3-deoxy-D-manno-octulosonate and CTP: step 1/1. Its pathway is bacterial outer membrane biogenesis; lipopolysaccharide biosynthesis. Activates KDO (a required 8-carbon sugar) for incorporation into bacterial lipopolysaccharide in Gram-negative bacteria. This chain is 3-deoxy-manno-octulosonate cytidylyltransferase, found in Thiobacillus denitrificans (strain ATCC 25259 / T1).